Reading from the N-terminus, the 488-residue chain is Solanidine UDP-glucose glucosyltransferase 1 (488 aa).

Residue histidine 23 is the Proton acceptor of the active site. Histidine 23 is an an anthocyanidin binding site. Aspartate 127 acts as the Charge relay in catalysis. Residues valine 352, glutamine 354, histidine 369, asparagine 373, serine 374, and glutamate 377 each contribute to the UDP-alpha-D-glucose site. Alanine 392 is an an anthocyanidin binding site. Residues aspartate 393 and glutamine 394 each contribute to the UDP-alpha-D-glucose site.

It belongs to the UDP-glycosyltransferase family. Expressed in the shoot apical meristem (SAM) and tuber.

The catalysed reaction is solasodine + UDP-alpha-D-glucose = solasodine 3-beta-D-glucoside + UDP + H(+). It catalyses the reaction solanidine + UDP-alpha-D-glucose = solanidine 3-O-beta-D-glucopyranoside + UDP + H(+). It carries out the reaction tomatidine + UDP-alpha-D-glucose = tomatidine 3-O-beta-D-glucopyranoside + UDP + H(+). Functionally, glucosyltransferase involved in the glucosylation of the steroidal alkaloid aglycons solanidine, solasodine and tomatidine to produce their corresponding glycoalkaloids. The protein is Solanidine UDP-glucose glucosyltransferase 1 of Solanum tuberosum (Potato).